Reading from the N-terminus, the 394-residue chain is Elongation factor Tu 2 (394 aa).

In terms of domain architecture, tr-type G spans 10–204 (KPHVNVGTIG…ALDSYIPEPE (195 aa)). The G1 stretch occupies residues 19–26 (GHVDHGKT). 19–26 (GHVDHGKT) contacts GTP. Thr26 is a binding site for Mg(2+). Positions 60–64 (GITIN) are G2. The segment at 81–84 (DCPG) is G3. Residues 81–85 (DCPGH) and 136–139 (NKCD) each bind GTP. Positions 136 to 139 (NKCD) are G4. Residues 174–176 (SAL) form a G5 region.

Belongs to the TRAFAC class translation factor GTPase superfamily. Classic translation factor GTPase family. EF-Tu/EF-1A subfamily. Monomer.

Its subcellular location is the cytoplasm. It catalyses the reaction GTP + H2O = GDP + phosphate + H(+). In terms of biological role, GTP hydrolase that promotes the GTP-dependent binding of aminoacyl-tRNA to the A-site of ribosomes during protein biosynthesis. The chain is Elongation factor Tu 2 from Shewanella loihica (strain ATCC BAA-1088 / PV-4).